Here is a 302-residue protein sequence, read N- to C-terminus: Large ribosomal subunit protein uL29m (302 aa).

The protein belongs to the universal ribosomal protein uL29 family. Component of the mitochondrial large ribosomal subunit. Mature mitochondrial ribosomes consist of a small (37S) and a large (54S) subunit. The 37S subunit contains at least 33 different proteins and 1 molecule of RNA (15S). The 54S subunit contains at least 45 different proteins and 1 molecule of RNA (21S).

Its subcellular location is the mitochondrion. In Debaryomyces hansenii (strain ATCC 36239 / CBS 767 / BCRC 21394 / JCM 1990 / NBRC 0083 / IGC 2968) (Yeast), this protein is Large ribosomal subunit protein uL29m (MRPL4).